We begin with the raw amino-acid sequence, 277 residues long: Sulfur carrier protein FdhD (277 aa).

Cysteine 121 (cysteine persulfide intermediate) is an active-site residue. 260–265 (FCKPGR) serves as a coordination point for Mo-bis(molybdopterin guanine dinucleotide).

The protein belongs to the FdhD family.

It localises to the cytoplasm. In terms of biological role, required for formate dehydrogenase (FDH) activity. Acts as a sulfur carrier protein that transfers sulfur from IscS to the molybdenum cofactor prior to its insertion into FDH. The polypeptide is Sulfur carrier protein FdhD (Escherichia coli O8 (strain IAI1)).